The chain runs to 465 residues: MGIMMMILGLLVIIVCLCTALLRWNQMRYSKKGLPPGTMGWPIFGETTEFLKQGPDFMKNQRLRYGSFFKSHILGCPTIVSMDAELNRYILMNESKGLVAGYPQSMLDILGTCNIAAVHGPSHRLMRGSLLSLISPTMMKDHLLPKIDDFMRNYLCGWDDLETVDIQEKTKHMAFLSSLLQIAETLKKPEVEEYRTEFFKLVVGTLSVPIDIPGTNYRSGVQARNNIDRLLTELMQERKESGETFTDMLGYLMKKEDNRYLLTDKEIRDQVVTILYSGYETVSTTSMMALKYLHDHPKALEELRREHLAIRERKRPDEPLTLDDIKSMKFTRAVIFETSRLATIVNGVLRKTTHDLELNGYLIPKGWRIYVYTREINYDTSLYEDPMIFNPWRWMEKSLESKSYFLLFGGGVRLCPGKELGISEVSSFLHYFVTKYRWEENGEDKLMVFPRVSAPKGYHLKCSPY.

The chain crosses the membrane as a helical span at residues Gly2 to Leu22. Cys415 serves as a coordination point for heme. Cys462 is lipidated: S-farnesyl cysteine. Residues Cys462–Tyr465 carry the Farnesylation CAAX motif motif.

Belongs to the cytochrome P450 family. Heme is required as a cofactor. In terms of processing, isoprenylated (farnesylated); this addition of a 15-carbon farnesyl isoprenoid to the carboxy terminus is required for endoplasmic reticulum localization and essential for the biosynthesis of brassinolide. Expressed in stems, hypocotyls, leaves, siliques, shoots, and roots, with a higher expression in apical shoots.

It is found in the membrane. The protein localises to the endoplasmic reticulum. It carries out the reaction 6-deoxoteasterone + reduced [NADPH--hemoprotein reductase] + O2 = 6alpha-hydroxyteasterone + oxidized [NADPH--hemoprotein reductase] + H2O + H(+). The enzyme catalyses 6alpha-hydroxytyphasterol + reduced [NADPH--hemoprotein reductase] + O2 = teasterone + oxidized [NADPH--hemoprotein reductase] + 2 H2O + H(+). The catalysed reaction is 3-dehydro-6-deoxoteasterone + reduced [NADPH--hemoprotein reductase] + O2 = 3-dehydro-6alpha-hydroxyteasterone + oxidized [NADPH--hemoprotein reductase] + H2O + H(+). It catalyses the reaction 3-dehydro-6alpha-hydroxyteasterone + reduced [NADPH--hemoprotein reductase] + O2 = 3-dehydroteasterone + oxidized [NADPH--hemoprotein reductase] + 2 H2O + H(+). It carries out the reaction 6-deoxotyphasterol + reduced [NADPH--hemoprotein reductase] + O2 = 6alpha-hydroxytyphasterol + oxidized [NADPH--hemoprotein reductase] + H2O + H(+). The enzyme catalyses 6alpha-hydroxytyphasterol + reduced [NADPH--hemoprotein reductase] + O2 = typhasterol + oxidized [NADPH--hemoprotein reductase] + 2 H2O + H(+). The catalysed reaction is 6-deoxocastasterone + reduced [NADPH--hemoprotein reductase] + O2 = 6alpha-hydroxycastasterone + oxidized [NADPH--hemoprotein reductase] + H2O + H(+). It catalyses the reaction 6alpha-hydroxycastasterone + reduced [NADPH--hemoprotein reductase] + O2 = castasterone + oxidized [NADPH--hemoprotein reductase] + 2 H2O + H(+). It carries out the reaction 6-deoxo-28-norteasterone + 2 reduced [NADPH--hemoprotein reductase] + 2 O2 = 28-norteasterone + 2 oxidized [NADPH--hemoprotein reductase] + 3 H2O + 2 H(+). The enzyme catalyses 6-deoxo-28-norteasterone + reduced [NADPH--hemoprotein reductase] + O2 = 6alpha-hydroxy-28-norteasterone + oxidized [NADPH--hemoprotein reductase] + H2O + H(+). The catalysed reaction is 6alpha-hydroxy-28-norteasterone + reduced [NADPH--hemoprotein reductase] + O2 = 28-norteasterone + oxidized [NADPH--hemoprotein reductase] + 2 H2O + H(+). It catalyses the reaction 6-deoxo-28-nortyphasterol + 2 reduced [NADPH--hemoprotein reductase] + 2 O2 = 28-nortyphasterol + 2 oxidized [NADPH--hemoprotein reductase] + 3 H2O + 2 H(+). It carries out the reaction 6-deoxo-28-nortyphasterol + reduced [NADPH--hemoprotein reductase] + O2 = 6alpha-hydroxy-28-nortyphasterol + oxidized [NADPH--hemoprotein reductase] + H2O + H(+). The enzyme catalyses 6alpha-hydroxy-28-nortyphasterol + reduced [NADPH--hemoprotein reductase] + O2 = 28-nortyphasterol + oxidized [NADPH--hemoprotein reductase] + 2 H2O + H(+). The catalysed reaction is 6-deoxo-28-norcastasterone + 2 reduced [NADPH--hemoprotein reductase] + 2 O2 = 28-norcastasterone + 2 oxidized [NADPH--hemoprotein reductase] + 3 H2O + 2 H(+). It catalyses the reaction 6-deoxo-28-norcastasterone + reduced [NADPH--hemoprotein reductase] + O2 = 6alpha-hydroxy-28-norcastasterone + oxidized [NADPH--hemoprotein reductase] + H2O + H(+). It carries out the reaction 6alpha-hydroxy-28-norcastasterone + reduced [NADPH--hemoprotein reductase] + O2 = 28-norcastasterone + oxidized [NADPH--hemoprotein reductase] + 2 H2O + H(+). The enzyme catalyses 3-dehydro-6-deoxo-28-norteasterone + 2 reduced [NADPH--hemoprotein reductase] + 2 O2 = 6-dehydro-28-norteasterone + 2 oxidized [NADPH--hemoprotein reductase] + 3 H2O + 2 H(+). The catalysed reaction is 3-dehydro-6-deoxo-28-norteasterone + reduced [NADPH--hemoprotein reductase] + O2 = 3-dehydro-6alpha-hydroxy-28-norteasterone + oxidized [NADPH--hemoprotein reductase] + H2O + H(+). It catalyses the reaction 3-dehydro-6alpha-hydroxy-28-norteasterone + reduced [NADPH--hemoprotein reductase] + O2 = 6-dehydro-28-norteasterone + oxidized [NADPH--hemoprotein reductase] + 2 H2O + H(+). It carries out the reaction teasterone + reduced [NADPH--hemoprotein reductase] + O2 = 7-oxateasterone + oxidized [NADPH--hemoprotein reductase] + H2O + H(+). The enzyme catalyses castasterone + reduced [NADPH--hemoprotein reductase] + O2 = brassinolide + oxidized [NADPH--hemoprotein reductase] + H2O + H(+). The catalysed reaction is typhasterol + reduced [NADPH--hemoprotein reductase] + O2 = 7-oxatyphasterol + oxidized [NADPH--hemoprotein reductase] + H2O + H(+). It catalyses the reaction 6-deoxocastasterone + 2 reduced [NADPH--hemoprotein reductase] + 2 O2 = castasterone + 2 oxidized [NADPH--hemoprotein reductase] + 3 H2O + 2 H(+). It carries out the reaction 6-deoxoteasterone + 2 reduced [NADPH--hemoprotein reductase] + 2 O2 = teasterone + 2 oxidized [NADPH--hemoprotein reductase] + 3 H2O + 2 H(+). The enzyme catalyses 6-deoxotyphasterol + 2 reduced [NADPH--hemoprotein reductase] + 2 O2 = typhasterol + 2 oxidized [NADPH--hemoprotein reductase] + 3 H2O + 2 H(+). The catalysed reaction is 3-dehydro-6-deoxoteasterone + 2 reduced [NADPH--hemoprotein reductase] + 2 O2 = 3-dehydroteasterone + 2 oxidized [NADPH--hemoprotein reductase] + 3 H2O + 2 H(+). The protein operates within plant hormone biosynthesis; brassinosteroid biosynthesis. Functionally, mediates Baeyer-Villiger oxidation and catalyzes the C6-oxidation step and lactonization in brassinosteroids biosynthesis. Converts 6-deoxocastasterone (6-deoxoCS) to castasterone (CS), and castasterone to brassinolide (BL). May also convert 6-deoxoteasterone (6-deoxoTE) to teasterone (TE), 3-dehydro-6-deoxoteasterone (6-deoxo3DT, 6-deoxo-3-DHT) to 3-dehydroteasterone (3DT, 3-DHT), and 6-deoxotyphasterol (6-deoxoTY) to typhasterol (TY). Also seems to be able to convert teasterone (TE) and typhasterol (TY) to 7-oxateasterone (7-OXTE) and 7-oxatyphasterol (7-OXTY), respectively. Catalyzes the conversion of 6-deoxo-28-norteasterone (6-deoxo-28-norTE) to 28-norteasterone (28-norTE), 6-deoxo-28-nordeoxoteasterone (6-deoxo-28-nor-3-DHT) to 28-nordeoxoteasterone (28-nor-3-DHT), 6-deoxo-28-nortyphasterol (6-deoxo-28-norTY) to 28-nortyphasterol (28-norTY) and 6-deoxo-28-norcastasterone (6-deoxo-28-norCS) to 28-norcastasterone (28-norCS). Involved in a negative regulation of responses to abscisic acid (ABA) and drought tolerance. The sequence is that of Cytochrome P450 85A2 (CYP85A2) from Arabidopsis thaliana (Mouse-ear cress).